A 133-amino-acid polypeptide reads, in one-letter code: UPF0225 protein BP2036 (133 aa).

Belongs to the UPF0225 family.

This Bordetella pertussis (strain Tohama I / ATCC BAA-589 / NCTC 13251) protein is UPF0225 protein BP2036.